Consider the following 362-residue polypeptide: P2Y purinoceptor 1 (362 aa).

Residues 1 to 40 (MTEALISAALNGTQPELLAGGWAAGNASTKCSLTKTGFQF) are Extracellular-facing. Asparagine 11 and asparagine 26 each carry an N-linked (GlcNAc...) asparagine glycan. Intrachain disulfides connect cysteine 31–cysteine 285 and cysteine 113–cysteine 191. Lysine 35 lines the ADP pocket. Residues 41–63 (YYLPTVYILVFITGFLGNSVAIW) traverse the membrane as a helical segment. At 64–76 (MFVFHMRPWSGIS) the chain is on the cytoplasmic side. The helical transmembrane segment at 77-98 (VYMFNLALADFLYVLTLPALIF) threads the bilayer. Residues 99–114 (YYFNKTDWIFGDVMCK) are Extracellular-facing. N-linked (GlcNAc...) asparagine glycosylation occurs at asparagine 102. Residues 115 to 136 (LQRFIFHVNLYGSILFLTCISV) form a helical membrane-spanning segment. The Cytoplasmic segment spans residues 137–155 (HRYTGVVHPLKSLGRLKKK). The helical transmembrane segment at 156 to 177 (NAVYVSSLVWALVVAVIAPILF) threads the bilayer. Over 178 to 203 (YSGTGVRRNKTITCYDTTADEYLRSY) the chain is Extracellular. Asparagine 186 carries an N-linked (GlcNAc...) asparagine glycan. Position 192–194 (192–194 (YDT)) interacts with ADP. A helical membrane pass occupies residues 204–226 (FVYSMCTTVFMFCIPFIVILGCY). The Cytoplasmic segment spans residues 227-249 (GLIVKALIYKDLDNSPLRRKSIY). Residues 250 to 273 (LVIIVLTVFAVSYLPFHVMKTLNL) form a helical membrane-spanning segment. Residues 272–276 (NLRAR), 292–295 (YATY), and arginine 299 contribute to the ADP site. Over 274-292 (RARLDFQTPQMCAFNDKVY) the chain is Extracellular. Residues 293-314 (ATYQVTRGLASLNSCVDPILYF) form a helical membrane-spanning segment. The Cytoplasmic portion of the chain corresponds to 315–362 (LAGDTFRRRLSRATRKSSRRSEPNVQSKSEEMTLNILTEYKQNGDTSL).

Belongs to the G-protein coupled receptor 1 family. Mainly found in blood, brain, and lung. To a lesser extent in stomach, gut and skeletal muscle.

The protein localises to the cell membrane. In terms of biological role, receptor for extracellular adenine nucleotides such as ADP. In platelets, binding to ADP leads to mobilization of intracellular calcium ions via activation of phospholipase C, a change in platelet shape, and ultimately platelet aggregation. This is P2Y purinoceptor 1 (P2RY1) from Meleagris gallopavo (Wild turkey).